Reading from the N-terminus, the 285-residue chain is GPN-loop GTPase 3 (285 aa).

GTP is bound at residue Gly13–Thr18. Residues Gly72–Asn74 carry the Gly-Pro-Asn (GPN)-loop; involved in dimer interface motif. Residue Thr174–Asp177 participates in GTP binding. The segment at Glu262–Ser285 is disordered.

This sequence belongs to the GPN-loop GTPase family. In terms of assembly, heterodimer with gpn1. Binds to RNA polymerase II (RNAPII).

Its function is as follows. Small GTPase required for proper localization of RNA polymerase II (RNAPII). May act at an RNAP assembly step prior to nuclear import. This Danio rerio (Zebrafish) protein is GPN-loop GTPase 3.